Reading from the N-terminus, the 583-residue chain is Chromosomal replication initiator protein DnaA (583 aa).

The tract at residues 1 to 91 (MNAENLDPAT…SPMFPAFKVM (91 aa)) is domain I, interacts with DnaA modulators. Disordered regions lie at residues 86–179 (PAFK…QQPV) and 197–232 (VAGF…NYRD). The tract at residues 91–235 (MPPAQPEPQT…VTGNYRDPVT (145 aa)) is domain II. Over residues 97–106 (EPQTTASPED) the composition is skewed to polar residues. Basic and acidic residues-rich tracts occupy residues 126-135 (EDSRTPRHSA) and 147-174 (QERE…EHEP). Over residues 205 to 226 (AGTTAPQYPPQSEMQGSFTPGV) the composition is skewed to polar residues. The tract at residues 236–460 (HLNSNDTFDT…GALKRVIAMA (225 aa)) is domain III, AAA+ region. ATP-binding residues include Gly280, Gly282, Lys283, and Thr284. Positions 461 to 583 (SLNHQPVTRA…TVELKQHLND (123 aa)) are domain IV, binds dsDNA.

Belongs to the DnaA family. In terms of assembly, oligomerizes as a right-handed, spiral filament on DNA at oriC.

It is found in the cytoplasm. In terms of biological role, plays an essential role in the initiation and regulation of chromosomal replication. ATP-DnaA binds to the origin of replication (oriC) to initiate formation of the DNA replication initiation complex once per cell cycle. Binds the DnaA box (a 9 base pair repeat at the origin) and separates the double-stranded (ds)DNA. Forms a right-handed helical filament on oriC DNA; dsDNA binds to the exterior of the filament while single-stranded (ss)DNA is stabiized in the filament's interior. The ATP-DnaA-oriC complex binds and stabilizes one strand of the AT-rich DNA unwinding element (DUE), permitting loading of DNA polymerase. After initiation quickly degrades to an ADP-DnaA complex that is not apt for DNA replication. Binds acidic phospholipids. The protein is Chromosomal replication initiator protein DnaA of Bifidobacterium animalis subsp. lactis (strain AD011).